The following is a 235-amino-acid chain: Uridylate kinase (235 aa).

ATP is bound at residue 12–15 (KISG). Position 54 (G54) interacts with UMP. Residues G55 and R59 each coordinate ATP. UMP contacts are provided by residues D72 and 133 to 140 (TGNPFFST). ATP contacts are provided by Y166 and D169.

The protein belongs to the UMP kinase family. Homohexamer.

Its subcellular location is the cytoplasm. It carries out the reaction UMP + ATP = UDP + ADP. Its pathway is pyrimidine metabolism; CTP biosynthesis via de novo pathway; UDP from UMP (UMPK route): step 1/1. Inhibited by UTP. Catalyzes the reversible phosphorylation of UMP to UDP. This is Uridylate kinase from Acetivibrio thermocellus (strain ATCC 27405 / DSM 1237 / JCM 9322 / NBRC 103400 / NCIMB 10682 / NRRL B-4536 / VPI 7372) (Clostridium thermocellum).